A 545-amino-acid polypeptide reads, in one-letter code: MAKEIIFSDEARNKLYEGVKKLNDAVKVTMGPRGRNVLIQKSFGAPSITKDGVSVAKEVELKDSLENMGASLVREVASKTADQAGDGTTTATVLAHAIFKEGLRNITAGANPIEVKRGMDKACEAIVAELKKLSREVKDKKEIAQVATISANSDEKIGNLIADAMEKVGKDGVITVEEAKSINDELNVVEGMQFDRGYLSPYFITNAEKMTVELSSPYILLFDKKIANLKDLLPVLEQIQKTGKPLLIIAEDIEGEALATLVVNKLRGVLNISAVKAPGFGDRRKAMLEDIAILTGGEVISEELGRTLESATIQDLGQASSVIIDKDNTTIVNGAGEKANIDARVNQIKAQIAETTSDYDREKLQERLAKLSGGVAVIKVGAATETEMKEKKDRVDDALSATKAAVEEGIVIGGGAALIKAKAKIKLDLQGDEAIGAAIVERALRAPLRQIAENAGFDAGVVVNSVENAKDENTGFDAAKGEYVNMLESGIIDPVKVERVALLNAVSVASMLLTTEATISEIKEDKPTMPDMSGMGGMGGMGGMM.

Residues 29 to 32, K50, 86 to 90, G414, 477 to 479, and D493 each bind ATP; these read TMGP, DGTTT, and DAA.

The protein belongs to the chaperonin (HSP60) family. Forms a cylinder of 14 subunits composed of two heptameric rings stacked back-to-back. Interacts with the co-chaperonin GroES.

It is found in the cytoplasm. The enzyme catalyses ATP + H2O + a folded polypeptide = ADP + phosphate + an unfolded polypeptide.. In terms of biological role, together with its co-chaperonin GroES, plays an essential role in assisting protein folding. The GroEL-GroES system forms a nano-cage that allows encapsulation of the non-native substrate proteins and provides a physical environment optimized to promote and accelerate protein folding. This chain is Chaperonin GroEL, found in Campylobacter jejuni (strain RM1221).